The following is a 245-amino-acid chain: Probable membrane transporter protein YdhB (245 aa).

8 helical membrane passes run 1-21 (MLII…GAGG), 34-56 (HIPI…LSGA), 71-91 (LIVG…TSFI), 98-118 (YLTA…LFIL), 137-157 (ILGI…APFI), 177-197 (MLVI…EGFV), 199-219 (YVLL…GAKF), and 225-245 (KVVL…LLLF).

This sequence belongs to the 4-toluene sulfonate uptake permease (TSUP) (TC 2.A.102) family.

It is found in the cell membrane. The chain is Probable membrane transporter protein YdhB (ydhB) from Bacillus subtilis (strain 168).